We begin with the raw amino-acid sequence, 119 residues long: MNRNQILQNIEANQIKANLPNIYVGDYVKVGLLIQEGNKERVQPYEGVVIAKHNSASNSTITVRKMFQGIGVERIFLIHSPRITSIEVISNSKVRRAKLYYLRERIGKATRLKQKFSKV.

This sequence belongs to the bacterial ribosomal protein bL19 family.

It localises to the plastid. The protein localises to the chloroplast. This Mesostigma viride (Green alga) protein is Large ribosomal subunit protein bL19c.